Here is a 472-residue protein sequence, read N- to C-terminus: Eukaryotic translation initiation factor 2 subunit 3 (472 aa).

Position 2 is an N-acetylalanine (Ala-2). Ser-16 carries the phosphoserine modification. The tr-type G domain maps to 39 to 248 (QATINIGTIG…IVKKIPVPPR (210 aa)). The tract at residues 48–55 (GHVAHGKS) is G1. 51-56 (AHGKST) contacts GTP. The tract at residues 76–80 (NITIK) is G2. Residues 134–137 (DCPG) form a G3 region. GTP-binding positions include 190–193 (NKID) and 225–227 (SAQ). The interval 190-193 (NKID) is G4. The G5 stretch occupies residues 225–227 (SAQ). An interacts with CDC123 region spans residues 457–469 (GQIRRGVTIKPTV).

The protein belongs to the TRAFAC class translation factor GTPase superfamily. Classic translation factor GTPase family. EIF2G subfamily. In terms of assembly, eukaryotic translation initiation factor 2 eIF2 is a heterotrimeric complex composed of an alpha (EIF2S1), a beta (EIF2S2) and a gamma (EIF2S3) chain. eIF2 is member of the 43S pre-initiation complex (43S PIC). Interacts (via C-terminus) with CDC123; the interaction is direct.

It is found in the cytoplasm. Its subcellular location is the cytosol. It carries out the reaction GTP + H2O = GDP + phosphate + H(+). Its function is as follows. Member of the eIF2 complex that functions in the early steps of protein synthesis by forming a ternary complex with GTP and initiator tRNA. This complex binds to a 40S ribosomal subunit, followed by mRNA binding to form the 43S pre-initiation complex (43S PIC). Junction of the 60S ribosomal subunit to form the 80S initiation complex is preceded by hydrolysis of the GTP bound to eIF2 and release of an eIF2-GDP binary complex. In order for eIF2 to recycle and catalyze another round of initiation, the GDP bound to eIF2 must exchange with GTP by way of a reaction catalyzed by eIF-2B. In Pongo abelii (Sumatran orangutan), this protein is Eukaryotic translation initiation factor 2 subunit 3 (EIF2S3).